The chain runs to 335 residues: 2-acylglycerol O-acyltransferase 2 (335 aa).

A run of 2 helical transmembrane segments spans residues 24–44 (WAVS…LLLF) and 104–124 (YIMG…NFCT). An N-linked (GlcNAc...) asparagine glycan is attached at asparagine 206.

The protein belongs to the diacylglycerol acyltransferase family.

The protein localises to the endoplasmic reticulum membrane. The protein resides in the cytoplasm. Its subcellular location is the perinuclear region. The catalysed reaction is a 2-acylglycerol + an acyl-CoA = a 1,2-diacylglycerol + CoA. It catalyses the reaction a 2-acylglycerol + an acyl-CoA = a 1,2-diacyl-sn-glycerol + CoA. The enzyme catalyses a 2-acylglycerol + an acyl-CoA = a 2,3-diacyl-sn-glycerol + CoA. It carries out the reaction a 1-acylglycerol + an acyl-CoA = a 1,2-diacylglycerol + CoA. The catalysed reaction is a 1-acylglycerol + an acyl-CoA = a 1,3-diacylglycerol + CoA. It catalyses the reaction 1-O-alkylglycerol + an acyl-CoA = 1-O-alkyl-3-acylglycerol + CoA. The enzyme catalyses an acyl-CoA + a 1,2-diacyl-sn-glycerol = a triacyl-sn-glycerol + CoA. Its pathway is glycerolipid metabolism; triacylglycerol biosynthesis. Its function is as follows. Involved in glycerolipid synthesis and lipid metabolism. Catalyzes the formation of diacylglycerol, the precursor of triacylglycerol, by transferring the acyl chain of a fatty acyl-CoA to a monoacylglycerol. Plays a central role in absorption of dietary fat in the small intestine by catalyzing the resynthesis of triacylglycerol in enterocytes. Has a preference toward monoacylglycerols containing unsaturated fatty acids in an order of C18:3 &gt; C18:2 &gt; C18:1 &gt; C18:0 at sn-2. Able to use 1-monoalkylglycerol (1-MAkG, 1-O-alkylglycerol) as an acyl acceptor for the synthesis of monoalkyl-monoacylglycerol (MAMAG, 1-O-alkyl-3-acylglycerol or 1-O-alkyl-2-acylglycerol) and subsequently, with lower efficiency, may add another acyl chain producing monoalkyl-diacylglycerol (MADAG, 1-O-alkyl-2,3-diacylglycerol). Possesses weak but significant activity with diacylglycerol as substrate, producing triacylglycerol (triacyl-sn-glycerol). In Xenopus tropicalis (Western clawed frog), this protein is 2-acylglycerol O-acyltransferase 2 (mogat2).